We begin with the raw amino-acid sequence, 515 residues long: 2,3-bisphosphoglycerate-independent phosphoglycerate mutase (515 aa).

The Mn(2+) site is built by aspartate 14 and serine 64. Serine 64 functions as the Phosphoserine intermediate in the catalytic mechanism. Residues histidine 125, 155–156 (RD), arginine 187, arginine 193, 263–266 (RADR), and lysine 337 each bind substrate. Residues aspartate 404, histidine 408, aspartate 445, histidine 446, and histidine 464 each coordinate Mn(2+).

The protein belongs to the BPG-independent phosphoglycerate mutase family. Monomer. Mn(2+) serves as cofactor.

It carries out the reaction (2R)-2-phosphoglycerate = (2R)-3-phosphoglycerate. The protein operates within carbohydrate degradation; glycolysis; pyruvate from D-glyceraldehyde 3-phosphate: step 3/5. Catalyzes the interconversion of 2-phosphoglycerate and 3-phosphoglycerate. The chain is 2,3-bisphosphoglycerate-independent phosphoglycerate mutase from Yersinia pestis bv. Antiqua (strain Antiqua).